The chain runs to 460 residues: DNA repair protein RadA (460 aa).

Residues 11 to 28 (CNECGADYPRWQGQCSAC) form a C4-type zinc finger. An ATP-binding site is contributed by 102-109 (GNPGAGKS). Residues 258 to 262 (KNRFG) carry the RadA KNRFG motif motif. The lon-protease-like stretch occupies residues 357–460 (DVFVNVVGGV…ADALSVFDDL (104 aa)).

Belongs to the RecA family. RadA subfamily.

Its function is as follows. DNA-dependent ATPase involved in processing of recombination intermediates, plays a role in repairing DNA breaks. Stimulates the branch migration of RecA-mediated strand transfer reactions, allowing the 3' invading strand to extend heteroduplex DNA faster. Binds ssDNA in the presence of ADP but not other nucleotides, has ATPase activity that is stimulated by ssDNA and various branched DNA structures, but inhibited by SSB. Does not have RecA's homology-searching function. In Salmonella typhimurium (strain LT2 / SGSC1412 / ATCC 700720), this protein is DNA repair protein RadA.